Consider the following 350-residue polypeptide: Dihydroorotate dehydrogenase (quinone) (350 aa).

FMN contacts are provided by residues 67-71 (AGFDK) and Gly-91. A substrate-binding site is contributed by Lys-71. 116–120 (NRMGL) provides a ligand contact to substrate. Positions 144 and 177 each coordinate FMN. Asn-177 contributes to the substrate binding site. Cys-180 acts as the Nucleophile in catalysis. Asn-182 lines the substrate pocket. 2 residues coordinate FMN: Lys-213 and Thr-241. A substrate-binding site is contributed by 242 to 243 (NT). A disordered region spans residues 245-265 (TERPASLRSPNAVETGGLSGK). FMN-binding positions include Gly-264, Gly-291, and 312–313 (YT).

It belongs to the dihydroorotate dehydrogenase family. Type 2 subfamily. In terms of assembly, monomer. FMN is required as a cofactor.

It localises to the cell membrane. The catalysed reaction is (S)-dihydroorotate + a quinone = orotate + a quinol. The protein operates within pyrimidine metabolism; UMP biosynthesis via de novo pathway; orotate from (S)-dihydroorotate (quinone route): step 1/1. Its function is as follows. Catalyzes the conversion of dihydroorotate to orotate with quinone as electron acceptor. The chain is Dihydroorotate dehydrogenase (quinone) (pyrD) from Haloarcula marismortui (strain ATCC 43049 / DSM 3752 / JCM 8966 / VKM B-1809) (Halobacterium marismortui).